The chain runs to 668 residues: MTLYDENNLHIIKDNLRYLKLLSKQYPSISSASSEIINLQAILNLPKGTEHFISDVHGEYESFTHMLKNASGVIKRKIDDVFGTSLRECDKKNLATLIYYPEQKLDLIKKSEKNLEDWYKITLYRLIRLCQIVSSKYTRSKVRKSLPSDFAYIIEELLNEQGDRVDKQEYYNSIIETIIDIDRASEFIIAISNVIQRLVVDKLHIIGDIYDRGPGAEIIIEALSKHHSIDIQWGNHDIVWMGAAAGCEACIANVIRISLRYANLSTLEDGYGINLLPLATFAMDFYKEDNCENFKPRTIDKNLNETDIKLLSKMHKAISIIQFKLEGKIIKRRPEFKMEERLLLDKINIKEGTLNLNEKIYKLIDTNFPTLDKENPYELNERERDLVEKLTNSFINSEKLQRHIKFLYSNGSLYLKYNSNLLYHGCIPLNDDGSLKEVTLCKETLKGKSLLDKLDRLAREAYFFKKDPESKLYGMDMMWYLWCGPNSPLFGKKKMTTFERYFLDDKNTHKEEKNPYYKYRNNEKMCTMIFEEFELDADNSHIINGHIPVKTKEGENPIKANGKLLVIDGGFCKAYQPQTGIAGYTLIYNSYGLLLTSHEPFSSIHKAIVEGNDILSSTTILEHVSSRKRVLDTDSGEEIKKQIHDLEMLLVAYRKGLIKEENEANIRF.

Belongs to the FBPase class 3 family. Requires Mn(2+) as cofactor.

It catalyses the reaction beta-D-fructose 1,6-bisphosphate + H2O = beta-D-fructose 6-phosphate + phosphate. It participates in carbohydrate biosynthesis; gluconeogenesis. This is Fructose-1,6-bisphosphatase class 3 from Clostridium botulinum (strain 657 / Type Ba4).